A 119-amino-acid chain; its full sequence is Auxin-responsive protein SAUR78 (119 aa).

The protein belongs to the ARG7 family.

Its function is as follows. May be involved in the regulation of ethylene receptor signaling. Promotes cell expansion and plant growth. In Arabidopsis thaliana (Mouse-ear cress), this protein is Auxin-responsive protein SAUR78.